The following is a 100-amino-acid chain: Large ribosomal subunit protein bL27 (100 aa).

A propeptide spanning residues 1 to 9 (MIIMNLQIF) is cleaved from the precursor. The disordered stretch occupies residues 13 to 32 (KGMGSSKNGRDSESKRLGTK).

It belongs to the bacterial ribosomal protein bL27 family. Post-translationally, the N-terminus is cleaved by ribosomal processing cysteine protease Prp.

In Clostridium kluyveri (strain ATCC 8527 / DSM 555 / NBRC 12016 / NCIMB 10680 / K1), this protein is Large ribosomal subunit protein bL27.